We begin with the raw amino-acid sequence, 330 residues long: Polygalacturonase inhibitor 2 (330 aa).

A signal peptide spans 1 to 21 (MDKTMTLFLLLSTLLLTTSLA). 2 disulfides stabilise this stretch: C25–C55 and C56–C63. LRR repeat units lie at residues 69 to 93 (NHRV…VGDL), 94 to 117 (PYLT…TIAK), 118 to 141 (LKNL…FLSQ), 142 to 166 (LKNL…LSSL), 167 to 192 (RKLE…TFSG), 194 to 215 (VPSL…LGNP), 217 to 237 (FYRI…LFGA), 238 to 260 (KKTT…KVKL), 261 to 285 (AKTL…WSKA), and 287 to 308 (FQLL…EYIQ). 3 N-linked (GlcNAc...) asparagine glycosylation sites follow: N106, N120, and N130. A glycan (N-linked (GlcNAc...) asparagine) is linked at N291. Cystine bridges form between C298–C320 and C322–C329.

Belongs to the polygalacturonase-inhibiting protein family.

It localises to the secreted. Its subcellular location is the cell wall. It is found in the membrane. In terms of biological role, inhibitor of fungal polygalacturonase. It is an important factor for plant resistance to phytopathogenic fungi. The protein is Polygalacturonase inhibitor 2 (PGIP2) of Arabidopsis thaliana (Mouse-ear cress).